We begin with the raw amino-acid sequence, 209 residues long: MARSKTSLGWLKRHVNDPYVKQAQKDGYRSRASYKLLEIQEKYKLIRPGMNVVDLGAAPGGWSQVTSRLIGGQGRLIASDILEMDSIPDVTFIQGDFTEDAVLAQILEAVGNSQVDLVISDMAPNMSGTPEVDMPKAMFLCELALDLAERILKPGGNFVIKIFQGEGFDTYLKDARKKFDKIQMIKPDSSRGSSREQYMLAWGYRGRSE.

The S-adenosyl-L-methionine site is built by glycine 60, tryptophan 62, aspartate 80, aspartate 96, and aspartate 121. Catalysis depends on lysine 161, which acts as the Proton acceptor.

Belongs to the class I-like SAM-binding methyltransferase superfamily. RNA methyltransferase RlmE family.

Its subcellular location is the cytoplasm. The enzyme catalyses uridine(2552) in 23S rRNA + S-adenosyl-L-methionine = 2'-O-methyluridine(2552) in 23S rRNA + S-adenosyl-L-homocysteine + H(+). In terms of biological role, specifically methylates the uridine in position 2552 of 23S rRNA at the 2'-O position of the ribose in the fully assembled 50S ribosomal subunit. This is Ribosomal RNA large subunit methyltransferase E from Pseudomonas fluorescens (strain Pf0-1).